The sequence spans 355 residues: Protein RecA (355 aa).

65 to 72 (GPESSGKT) contributes to the ATP binding site.

It belongs to the RecA family.

Its subcellular location is the cytoplasm. Can catalyze the hydrolysis of ATP in the presence of single-stranded DNA, the ATP-dependent uptake of single-stranded DNA by duplex DNA, and the ATP-dependent hybridization of homologous single-stranded DNAs. It interacts with LexA causing its activation and leading to its autocatalytic cleavage. The chain is Protein RecA from Pseudomonas putida (strain ATCC 47054 / DSM 6125 / CFBP 8728 / NCIMB 11950 / KT2440).